The sequence spans 368 residues: UDP-N-acetylenolpyruvoylglucosamine reductase (368 aa).

An FAD-binding PCMH-type domain is found at 32 to 199 (IGGKPRSAVR…LAIELQLLTD (168 aa)). The active site involves Arg177. Residue Ser257 is the Proton donor of the active site. Glu358 is an active-site residue.

The protein belongs to the MurB family. FAD serves as cofactor.

It localises to the cytoplasm. It carries out the reaction UDP-N-acetyl-alpha-D-muramate + NADP(+) = UDP-N-acetyl-3-O-(1-carboxyvinyl)-alpha-D-glucosamine + NADPH + H(+). Its pathway is cell wall biogenesis; peptidoglycan biosynthesis. Cell wall formation. The polypeptide is UDP-N-acetylenolpyruvoylglucosamine reductase (Corynebacterium glutamicum (strain R)).